The chain runs to 65 residues: Small ribosomal subunit protein bS21 (65 aa).

This sequence belongs to the bacterial ribosomal protein bS21 family.

The polypeptide is Small ribosomal subunit protein bS21 (Chlorobium chlorochromatii (strain CaD3)).